Consider the following 625-residue polypeptide: Glucose dehydrogenase [FAD, quinone] (625 aa).

The N-terminal stretch at 1–42 (MATSPSSCDCLVGVPTGPTLASTCGGSAFMLFMGLLEVFIRS) is a signal peptide. FAD is bound at residue 66–95 (DFIVIGGGSAGSVVASRLSEVPQWKVLLIE). Histidine 544 acts as the Proton acceptor in catalysis. A non-standard amino acid (selenocysteine) is located at residue selenocysteine 613.

It belongs to the GMC oxidoreductase family. FAD serves as cofactor.

It is found in the secreted. The catalysed reaction is a quinone + D-glucose = D-glucono-1,5-lactone + a quinol. The sequence is that of Glucose dehydrogenase [FAD, quinone] (Gld) from Drosophila pseudoobscura pseudoobscura (Fruit fly).